A 514-amino-acid polypeptide reads, in one-letter code: 2,3-bisphosphoglycerate-independent phosphoglycerate mutase (514 aa).

2 residues coordinate Mn(2+): D14 and S64. Catalysis depends on S64, which acts as the Phosphoserine intermediate. Substrate contacts are provided by residues H125, 155 to 156 (RD), R187, R193, 263 to 266 (RADR), and K336. D403, H407, D444, H445, and H463 together coordinate Mn(2+).

It belongs to the BPG-independent phosphoglycerate mutase family. In terms of assembly, monomer. Mn(2+) is required as a cofactor.

It carries out the reaction (2R)-2-phosphoglycerate = (2R)-3-phosphoglycerate. Its pathway is carbohydrate degradation; glycolysis; pyruvate from D-glyceraldehyde 3-phosphate: step 3/5. Catalyzes the interconversion of 2-phosphoglycerate and 3-phosphoglycerate. The sequence is that of 2,3-bisphosphoglycerate-independent phosphoglycerate mutase from Enterobacter sp. (strain 638).